Consider the following 273-residue polypeptide: ATP synthase F(1) complex subunit gamma, mitochondrial (273 aa).

At lysine 14 the chain carries N6-acetyllysine. The residue at position 24 (lysine 24) is an N6-succinyllysine. Position 30 is an N6-acetyllysine (lysine 30). Lysine 90 carries the post-translational modification N6-acetyllysine; alternate. Lysine 90 carries the post-translational modification N6-succinyllysine; alternate. Position 113 is an N6-acetyllysine (lysine 113). Position 121 is a phosphoserine (serine 121). An N6-acetyllysine; alternate modification is found at lysine 129. Position 129 is an N6-succinyllysine; alternate (lysine 129). Lysine 172 bears the N6-acetyllysine mark. Lysine 245 carries the post-translational modification N6-succinyllysine.

Belongs to the ATPase gamma chain family. In terms of assembly, component of the ATP synthase complex composed at least of ATP5F1A/subunit alpha, ATP5F1B/subunit beta, ATP5MC1/subunit c (homooctomer), MT-ATP6/subunit a, MT-ATP8/subunit 8, ATP5ME/subunit e, ATP5MF/subunit f, ATP5MG/subunit g, ATP5MK/subunit k, ATP5MJ/subunit j, ATP5F1C/subunit gamma, ATP5F1D/subunit delta, ATP5F1E/subunit epsilon, ATP5PF/subunit F6, ATP5PB/subunit b, ATP5PD/subunit d, ATP5PO/subunit OSCP. ATP synthase complex consists of a soluble F(1) head domain (subunits alpha(3) and beta(3)) - the catalytic core - and a membrane F(0) domain - the membrane proton channel (subunits c, a, 8, e, f, g, k and j). These two domains are linked by a central stalk (subunits gamma, delta, and epsilon) rotating inside the F1 region and a stationary peripheral stalk (subunits F6, b, d, and OSCP). Interacts with FLVCR2; this interaction occurs in the absence of heme and is disrupted upon heme binding.

The protein resides in the mitochondrion inner membrane. Subunit gamma, of the mitochondrial membrane ATP synthase complex (F(1)F(0) ATP synthase or Complex V) that produces ATP from ADP in the presence of a proton gradient across the membrane which is generated by electron transport complexes of the respiratory chain. ATP synthase complex consist of a soluble F(1) head domain - the catalytic core - and a membrane F(1) domain - the membrane proton channel. These two domains are linked by a central stalk rotating inside the F(1) region and a stationary peripheral stalk. During catalysis, ATP synthesis in the catalytic domain of F(1) is coupled via a rotary mechanism of the central stalk subunits to proton translocation. In vivo, can only synthesize ATP although its ATP hydrolase activity can be activated artificially in vitro. With the central stalk subunit delta, is essential for the biogenesis of F(1) catalytic part of the ATP synthase complex namely in the formation of F1 assembly intermediate. The chain is ATP synthase F(1) complex subunit gamma, mitochondrial from Rattus norvegicus (Rat).